The chain runs to 170 residues: Protein SprT (170 aa).

One can recognise a SprT-like domain in the interval 22-163 (LQQANLTLQT…RCRRCGKTLR (142 aa)). His-78 lines the Zn(2+) pocket. Glu-79 is an active-site residue. His-82 provides a ligand contact to Zn(2+).

This sequence belongs to the SprT family. It depends on Zn(2+) as a cofactor.

The protein resides in the cytoplasm. In Pectobacterium atrosepticum (strain SCRI 1043 / ATCC BAA-672) (Erwinia carotovora subsp. atroseptica), this protein is Protein SprT.